A 180-amino-acid chain; its full sequence is Nudix hydrolase 16, mitochondrial (180 aa).

The Nudix hydrolase domain occupies 18–162 (GSRLVAGCIP…WMKDALVEGF (145 aa)). F60 is a substrate binding site. Residues G63, E78, E82, and E144 each coordinate Mn(2+). The Nudix box signature appears at 63-84 (GGWENDETVREAAAREAVEEAG).

The protein belongs to the Nudix hydrolase family. The cofactor is Mg(2+). It depends on Mn(2+) as a cofactor. Expressed in roots, leaves, stems and inflorescences.

Its subcellular location is the mitochondrion. Its function is as follows. Probably mediates the hydrolysis of some nucleoside diphosphate derivatives. The sequence is that of Nudix hydrolase 16, mitochondrial (NUDT16) from Arabidopsis thaliana (Mouse-ear cress).